A 113-amino-acid polypeptide reads, in one-letter code: Probable 4-amino-4-deoxy-L-arabinose-phosphoundecaprenol flippase subunit ArnE (113 aa).

Helical transmembrane passes span S37 to L57, I62 to A82, and A91 to L111. Positions A45–L111 constitute an EamA domain.

It belongs to the ArnE family. As to quaternary structure, heterodimer of ArnE and ArnF.

The protein localises to the cell inner membrane. It participates in bacterial outer membrane biogenesis; lipopolysaccharide biosynthesis. Translocates 4-amino-4-deoxy-L-arabinose-phosphoundecaprenol (alpha-L-Ara4N-phosphoundecaprenol) from the cytoplasmic to the periplasmic side of the inner membrane. This Photorhabdus laumondii subsp. laumondii (strain DSM 15139 / CIP 105565 / TT01) (Photorhabdus luminescens subsp. laumondii) protein is Probable 4-amino-4-deoxy-L-arabinose-phosphoundecaprenol flippase subunit ArnE.